Consider the following 860-residue polypeptide: Pre-neck appendage protein (860 aa).

Positions 309 and 311 each coordinate Mg(2+). Catalysis depends on glutamate 701, which acts as the Nucleophile. 752-801 lines the ATP pocket; it reads WQGQYLKNEFGGLIYETVEIDEGVFEKMPKINPSYNPKLEYLSRGERPEW.

As to quaternary structure, homotrimer. Each appendage is a homotrimer of gp12*. Mg(2+) is required as a cofactor. Autocleaved to produce the 74 kDa gp12* assembly attached to the phage particles. Autocleavage of the C-terminus is a posttrimerization event that is followed by an ATP-dependent release.

The protein localises to the virion. Its function is as follows. Structural component of the 12 appendages that hang from the lower collar. Adhesion protein that binds to the host cell surface during virus attachment and mediates teichoic acids degradation. This Bacillus subtilis (Bacteriophage B103) protein is Pre-neck appendage protein (12).